Here is a 284-residue protein sequence, read N- to C-terminus: NADH-cytochrome b5 reductase 1 (284 aa).

A helical transmembrane segment spans residues 8 to 28 (PLVIFSTLAAIILAAVAVYVV). The 104-residue stretch at 41–144 (DVFQKFPLIE…RGPKGFFTYT (104 aa)) folds into the FAD-binding FR-type domain. FAD-binding positions include 124-139 (DSKS…GPKG) and 150-182 (HLGM…KISL).

Belongs to the flavoprotein pyridine nucleotide cytochrome reductase family. Monomer. Component of the 2-(3-amino-3-carboxypropyl)histidine synthase complex composed of DPH1, DPH2, DPH3 and a NADH-dependent reductase, predominantly CBR1. It depends on FAD as a cofactor.

The protein resides in the mitochondrion outer membrane. It catalyses the reaction 2 Fe(III)-[cytochrome b5] + NADH = 2 Fe(II)-[cytochrome b5] + NAD(+) + H(+). The enzyme catalyses 2 Fe(3+)-[Dph3] + NADH = 2 Fe(2+)-[Dph3] + NAD(+) + H(+). It participates in protein modification; peptidyl-diphthamide biosynthesis. Its function is as follows. NADH-dependent reductase for DPH3 and cytochrome b5. Required for the first step of diphthamide biosynthesis, a post-translational modification of histidine which occurs in elongation factor 2. DPH1 and DPH2 transfer a 3-amino-3-carboxypropyl (ACP) group from S-adenosyl-L-methionine (SAM) to a histidine residue, the reaction is assisted by a reduction system comprising DPH3 and a NADH-dependent reductase, predominantly CBR1. By reducing DPH3, also involved in the formation of the tRNA wobble base modification mcm5s 2U (5-methoxycarbonylmethyl-2-thiouridine), mediated by the elongator complex. The cytochrome b5/NADH cytochrome b5 reductase electron transfer system supports the catalytic activity of several sterol biosynthetic enzymes. This chain is NADH-cytochrome b5 reductase 1 (CBR1), found in Meyerozyma guilliermondii (strain ATCC 6260 / CBS 566 / DSM 6381 / JCM 1539 / NBRC 10279 / NRRL Y-324) (Yeast).